We begin with the raw amino-acid sequence, 255 residues long: Small ribosomal subunit protein eS1 (255 aa).

Residues methionine 1–lysine 18 are compositionally biased toward basic residues. Positions methionine 1 to aspartate 28 are disordered. Alanine 2 carries the post-translational modification N-acetylalanine; partial. Over residues arginine 19–aspartate 28 the composition is skewed to basic and acidic residues.

This sequence belongs to the eukaryotic ribosomal protein eS1 family. In terms of assembly, component of the small ribosomal subunit. Mature ribosomes consist of a small (40S) and a large (60S) subunit. The 40S subunit contains about 33 different proteins and 1 molecule of RNA (18S). The 60S subunit contains about 49 different proteins and 3 molecules of RNA (25S, 5.8S and 5S).

The protein resides in the cytoplasm. The polypeptide is Small ribosomal subunit protein eS1 (Ajellomyces dermatitidis (strain ER-3 / ATCC MYA-2586) (Blastomyces dermatitidis)).